Reading from the N-terminus, the 184-residue chain is Translation initiation factor IF-3 (184 aa).

It belongs to the IF-3 family. In terms of assembly, monomer.

The protein localises to the cytoplasm. In terms of biological role, IF-3 binds to the 30S ribosomal subunit and shifts the equilibrium between 70S ribosomes and their 50S and 30S subunits in favor of the free subunits, thus enhancing the availability of 30S subunits on which protein synthesis initiation begins. The chain is Translation initiation factor IF-3 from Mycoplasma genitalium (strain ATCC 33530 / DSM 19775 / NCTC 10195 / G37) (Mycoplasmoides genitalium).